A 478-amino-acid chain; its full sequence is FERM domain-containing protein B (478 aa).

3 disordered regions span residues 19-39 (ELIP…TITS), 129-196 (EENS…GFLT), and 202-221 (KAQS…TIAS). 2 stretches are compositionally biased toward low complexity: residues 22–39 (PTQS…TITS) and 129–164 (EENS…ANDG). Positions 48 to 468 (VLIRIYFIDD…DWSEEWESKE (421 aa)) constitute an FERM domain. A compositionally biased stretch (gly residues) spans 165-179 (SGSGSGSGSGSGSGS). 2 stretches are compositionally biased toward low complexity: residues 180–189 (GTSTPNSPKG) and 204–216 (QSPQ…SSLS).

This Dictyostelium discoideum (Social amoeba) protein is FERM domain-containing protein B (frmB).